The sequence spans 888 residues: Alanine--tRNA ligase (888 aa).

4 residues coordinate Zn(2+): histidine 564, histidine 568, cysteine 676, and histidine 680.

The protein belongs to the class-II aminoacyl-tRNA synthetase family. Zn(2+) serves as cofactor.

It is found in the cytoplasm. It catalyses the reaction tRNA(Ala) + L-alanine + ATP = L-alanyl-tRNA(Ala) + AMP + diphosphate. Its function is as follows. Catalyzes the attachment of alanine to tRNA(Ala) in a two-step reaction: alanine is first activated by ATP to form Ala-AMP and then transferred to the acceptor end of tRNA(Ala). Also edits incorrectly charged Ser-tRNA(Ala) and Gly-tRNA(Ala) via its editing domain. This is Alanine--tRNA ligase from Bartonella tribocorum (strain CIP 105476 / IBS 506).